A 465-amino-acid chain; its full sequence is Siroheme synthase (465 aa).

Positions 1–203 (MEYLPLFHNL…GRTAEAERLL (203 aa)) are precorrin-2 dehydrogenase /sirohydrochlorin ferrochelatase. NAD(+) contacts are provided by residues 22–23 (EI) and 43–44 (PS). A Phosphoserine modification is found at Ser-128. The segment at 216 to 465 (GEVYLVGAGP…WFEGAQAAGR (250 aa)) is uroporphyrinogen-III C-methyltransferase. Pro-225 lines the S-adenosyl-L-methionine pocket. The active-site Proton acceptor is Asp-248. The active-site Proton donor is the Lys-270. Residues 301–303 (GGD), Ile-306, 331–332 (TA), Met-383, and Gly-412 each bind S-adenosyl-L-methionine.

The protein in the N-terminal section; belongs to the precorrin-2 dehydrogenase / sirohydrochlorin ferrochelatase family. In the C-terminal section; belongs to the precorrin methyltransferase family.

It catalyses the reaction uroporphyrinogen III + 2 S-adenosyl-L-methionine = precorrin-2 + 2 S-adenosyl-L-homocysteine + H(+). The catalysed reaction is precorrin-2 + NAD(+) = sirohydrochlorin + NADH + 2 H(+). The enzyme catalyses siroheme + 2 H(+) = sirohydrochlorin + Fe(2+). Its pathway is cofactor biosynthesis; adenosylcobalamin biosynthesis; precorrin-2 from uroporphyrinogen III: step 1/1. The protein operates within cofactor biosynthesis; adenosylcobalamin biosynthesis; sirohydrochlorin from precorrin-2: step 1/1. It participates in porphyrin-containing compound metabolism; siroheme biosynthesis; precorrin-2 from uroporphyrinogen III: step 1/1. It functions in the pathway porphyrin-containing compound metabolism; siroheme biosynthesis; siroheme from sirohydrochlorin: step 1/1. Its pathway is porphyrin-containing compound metabolism; siroheme biosynthesis; sirohydrochlorin from precorrin-2: step 1/1. In terms of biological role, multifunctional enzyme that catalyzes the SAM-dependent methylations of uroporphyrinogen III at position C-2 and C-7 to form precorrin-2 via precorrin-1. Then it catalyzes the NAD-dependent ring dehydrogenation of precorrin-2 to yield sirohydrochlorin. Finally, it catalyzes the ferrochelation of sirohydrochlorin to yield siroheme. This is Siroheme synthase from Stutzerimonas stutzeri (strain A1501) (Pseudomonas stutzeri).